The sequence spans 293 residues: uncharacterized protein (293 aa).

A helical transmembrane segment spans residues 55-77 (IVLAKEIFAVAFFSLGMSCLLMA).

It localises to the membrane. This is an uncharacterized protein from Caenorhabditis elegans.